The primary structure comprises 602 residues: Leucine-rich repeat-containing protein 40 (602 aa).

S71 carries the post-translational modification Phosphoserine. 20 LRR repeats span residues 83 to 104 (DLTK…LRLL), 106 to 127 (ALTV…IREL), 129 to 150 (NLQK…ITNL), 152 to 173 (NLKC…FEQL), 175 to 196 (NLED…FSSL), 198 to 219 (SLVR…INRM), 221 to 242 (RLKH…LAGM), 244 to 265 (SLEL…PSCS), 266 to 286 (LLKE…EHLK), 290 to 311 (SILV…IILL), 313 to 335 (SLER…GNLH), 336 to 356 (LKFL…IISK), 400 to 421 (TLKI…VFDA), 426 to 447 (IVTS…MVEL), 450 to 472 (MVSD…CVLQ), 473 to 494 (KLTF…MESL), 496 to 517 (RLQT…LYRI), 519 to 540 (TLET…KMKM), 543 to 564 (NLTT…LGNC), and 566 to 586 (NLRT…AILM).

In Homo sapiens (Human), this protein is Leucine-rich repeat-containing protein 40 (LRRC40).